A 135-amino-acid polypeptide reads, in one-letter code: RxLR effector protein PITG_02860 (135 aa).

A signal peptide spans 1–18 (MRLAFLLLAVSHFICGNA). The RxLR-dEER motif lies at 48–64 (RKLLRTDERLSEANEER). Residues 126-135 (LKDPQAFRGP) are NRL1-binding domain.

This sequence belongs to the RxLR effector family. Interacts with host ubiquitin E3 ligase NRL1.

The protein localises to the secreted. The protein resides in the host cytoplasm. Its subcellular location is the host nucleus. It localises to the host nucleoplasm. Effector that promotes P.infestans virulence and suppresses pattern-triggered immunity (PTI). Interacts with the host ubiquitin E3 ligase NRL1 and enhances the association between NRL1 and SWAP70 to promote proteasome-mediated degradation of SWAP70, which results in the suppression of immunity. The protein is RxLR effector protein PITG_02860 of Phytophthora infestans (strain T30-4) (Potato late blight agent).